The sequence spans 132 residues: ATP synthase epsilon chain, chloroplastic (132 aa).

This sequence belongs to the ATPase epsilon chain family. As to quaternary structure, F-type ATPases have 2 components, CF(1) - the catalytic core - and CF(0) - the membrane proton channel. CF(1) has five subunits: alpha(3), beta(3), gamma(1), delta(1), epsilon(1). CF(0) has three main subunits: a, b and c.

The protein localises to the plastid. It localises to the chloroplast thylakoid membrane. Produces ATP from ADP in the presence of a proton gradient across the membrane. In Coffea arabica (Arabian coffee), this protein is ATP synthase epsilon chain, chloroplastic.